Consider the following 221-residue polypeptide: uncharacterized protein (221 aa).

Helical transmembrane passes span 33-55 (YFLL…ISYI), 70-92 (FGYR…QKIV), 99-121 (LEML…FIII), 125-147 (YGAY…YTLL), 154-176 (YFND…SFWI), and 186-208 (IISM…ITLI).

The protein localises to the cell membrane. This is an uncharacterized protein from Aquifex aeolicus (strain VF5).